The chain runs to 277 residues: 3-methyl-2-oxobutanoate hydroxymethyltransferase (277 aa).

Residues Asp43 and Asp82 each coordinate Mg(2+). 3-methyl-2-oxobutanoate is bound by residues 43–44 (DS), Asp82, and Lys112. Glu114 lines the Mg(2+) pocket. Glu181 serves as the catalytic Proton acceptor.

This sequence belongs to the PanB family. Homodecamer; pentamer of dimers. Mg(2+) serves as cofactor.

It localises to the cytoplasm. The enzyme catalyses 3-methyl-2-oxobutanoate + (6R)-5,10-methylene-5,6,7,8-tetrahydrofolate + H2O = 2-dehydropantoate + (6S)-5,6,7,8-tetrahydrofolate. It functions in the pathway cofactor biosynthesis; (R)-pantothenate biosynthesis; (R)-pantoate from 3-methyl-2-oxobutanoate: step 1/2. In terms of biological role, catalyzes the reversible reaction in which hydroxymethyl group from 5,10-methylenetetrahydrofolate is transferred onto alpha-ketoisovalerate to form ketopantoate. This is 3-methyl-2-oxobutanoate hydroxymethyltransferase from Bacillus licheniformis (strain ATCC 14580 / DSM 13 / JCM 2505 / CCUG 7422 / NBRC 12200 / NCIMB 9375 / NCTC 10341 / NRRL NRS-1264 / Gibson 46).